The sequence spans 349 residues: MTEFDNLTWLHGKPQGSGLLKANPEDFVVVEDLGFTPDGEGEHILLRILKNGCNTRFVADVLAKFLKIHAREVSFAGQKDKHAVTEQWLCARVPGKEMPDFSAFQLEGCKVLEYARHKRKLRLGALKGNAFTLVLREISDRRDVETRLQAIRDGGVPNYFGAQRFGIGGSNLQGALRWAQSNAPVRDRNKRSFWLSAARSALFNQIVHQRLKKPDFNQVVDGDALQLAGRGSWFVATSEELPELQRRVDEKELMITASLPGSGEWGTQRAALAFEQDAIAQETVLQSLLLREKVEASRRAMLLYPQQLSWNWWDDVTVELRFWLPAGSFATSVVRELINTMGDYAHIAE.

Position 27 (F27) interacts with substrate. Residue D80 is the Nucleophile of the active site. Substrate is bound at residue N129. The 149-residue stretch at 155 to 303 (GVPNYFGAQR…VEASRRAMLL (149 aa)) folds into the TRUD domain. Position 329 (F329) interacts with substrate.

This sequence belongs to the pseudouridine synthase TruD family.

It carries out the reaction uridine(13) in tRNA = pseudouridine(13) in tRNA. Its function is as follows. Responsible for synthesis of pseudouridine from uracil-13 in transfer RNAs. The sequence is that of tRNA pseudouridine synthase D from Salmonella typhi.